Consider the following 301-residue polypeptide: Helicase VP6-A (301 aa).

Disordered regions lie at residues 1–99 (MIDW…TTGT) and 163–208 (RRKE…TSVG). Basic and acidic residues-rich tracts occupy residues 8 to 30 (ESGKGDKVEPKEENEAEESKDGE), 37 to 55 (GQKKESSKEAEDADVDRRV), and 67 to 81 (GFRERANENVDRGDG). ATP is bound at residue Lys82. 2 stretches are compositionally biased toward basic and acidic residues: residues 163–177 (RRKEKSETHARVAEK) and 186–202 (VHGDAQKESTEDEKTPE).

This sequence belongs to the orbivirus VP6 family. As to quaternary structure, homohexamer.

It localises to the virion. The catalysed reaction is ATP + H2O = ADP + phosphate + H(+). In terms of biological role, ATP dependent RNA helicase essential for RNA packaging and viral transcription. Possesses ss- and dsRNA-binding capacity. This chain is Helicase VP6-A (Segment-9), found in Bluetongue virus 2 (isolate USA) (BTV 2).